We begin with the raw amino-acid sequence, 364 residues long: MRILVSGGGTGGHIYPALALIREIKKLHPEARFLYIGTENGLESTIVPKAGIPFQSIVISGFKRKISFDNVKTVMRFVKGVQDSKRYIRRFNPDVVIGTGGYVCGPVVYAAAKLGIPTIVHEQNSVPGVTNKFLSRYVDKVAVCFEAAAEHFPQSKVVMTGNPRASEVMNQNGMKGKRSVGLSLSKKSVLIFGGSRGARPINDAFVEAIEQFGNKNYEVLYITGEVHYDKVMEIVREKGNPDNVMIKPFIHNMPEVLTGVDLVVSRAGATTLAELTALGKPSILIPSPYVTNNHQEKNAKSIVDKGAAKMLLEKDLTAETLLHNIDEILLNTQTLQNMKLAAKQLGIPDAANKLFEVMKQLMKK.

Residues 10–12 (TGG), Asn124, Ser195, Ile250, and Gln295 contribute to the UDP-N-acetyl-alpha-D-glucosamine site.

The protein belongs to the glycosyltransferase 28 family. MurG subfamily.

Its subcellular location is the cell membrane. The catalysed reaction is di-trans,octa-cis-undecaprenyl diphospho-N-acetyl-alpha-D-muramoyl-L-alanyl-D-glutamyl-meso-2,6-diaminopimeloyl-D-alanyl-D-alanine + UDP-N-acetyl-alpha-D-glucosamine = di-trans,octa-cis-undecaprenyl diphospho-[N-acetyl-alpha-D-glucosaminyl-(1-&gt;4)]-N-acetyl-alpha-D-muramoyl-L-alanyl-D-glutamyl-meso-2,6-diaminopimeloyl-D-alanyl-D-alanine + UDP + H(+). Its pathway is cell wall biogenesis; peptidoglycan biosynthesis. Functionally, cell wall formation. Catalyzes the transfer of a GlcNAc subunit on undecaprenyl-pyrophosphoryl-MurNAc-pentapeptide (lipid intermediate I) to form undecaprenyl-pyrophosphoryl-MurNAc-(pentapeptide)GlcNAc (lipid intermediate II). The sequence is that of UDP-N-acetylglucosamine--N-acetylmuramyl-(pentapeptide) pyrophosphoryl-undecaprenol N-acetylglucosamine transferase from Bacillus cytotoxicus (strain DSM 22905 / CIP 110041 / 391-98 / NVH 391-98).